The primary structure comprises 967 residues: RNA polymerase-associated protein RapA (967 aa).

The 171-residue stretch at Glu-163 to Asn-333 folds into the Helicase ATP-binding domain. Position 176-183 (Asp-176–Thr-183) interacts with ATP. Positions Asp-279 to His-282 match the DEAH box motif. The Helicase C-terminal domain occupies Arg-489 to Gly-660.

It belongs to the SNF2/RAD54 helicase family. RapA subfamily. In terms of assembly, interacts with the RNAP. Has a higher affinity for the core RNAP than for the holoenzyme. Its ATPase activity is stimulated by binding to RNAP.

Transcription regulator that activates transcription by stimulating RNA polymerase (RNAP) recycling in case of stress conditions such as supercoiled DNA or high salt concentrations. Probably acts by releasing the RNAP, when it is trapped or immobilized on tightly supercoiled DNA. Does not activate transcription on linear DNA. Probably not involved in DNA repair. This is RNA polymerase-associated protein RapA from Proteus mirabilis (strain HI4320).